Consider the following 376-residue polypeptide: 26S proteasome non-ATPase regulatory subunit 4 (376 aa).

The 184-residue stretch at 5-188 (STMVCVDNSE…LADALISSPI (184 aa)) folds into the VWFA domain. A Glycyl lysine isopeptide (Lys-Gly) (interchain with G-Cter in SUMO2) cross-link involves residue Lys122. An interaction with UBQLN1 region spans residues 197 to 262 (LGLGASDFEF…TEDSDDALLK (66 aa)). The 20-residue stretch at 211-230 (SADPELALALRVSMEEQRQR) folds into the UIM 1 domain. Positions 224-237 (MEEQRQRQEEEARR) are enriched in basic and acidic residues. The segment at 224 to 257 (MEEQRQRQEEEARRAAAASAAEAGIATPGTEDSD) is disordered. Residues Thr250 and Thr253 each carry the phosphothreonine modification. Phosphoserine occurs at positions 256 and 259. The 20-residue stretch at 282–301 (TEEEQIAYAMQMSLQGTEFS) folds into the UIM 2 domain. Residues 355–376 (MGALASQATKDGKNDKKEEEKK) form a disordered region. Residue Ser360 is modified to Phosphoserine. A compositionally biased stretch (basic and acidic residues) spans 364-376 (KDGKNDKKEEEKK).

The protein belongs to the proteasome subunit S5A family. As to quaternary structure, component of the 19S proteasome regulatory particle complex. The 26S proteasome consists of a 20S core particle (CP) and two 19S regulatory subunits (RP). The regulatory particle is made of a lid composed of 9 subunits, a base containing 6 ATPases and few additional components including PSMD4. Interacts with NUB1. Interacts with SQSTM1. Interacts with UBQLN4. Interacts with UBE3A. Interacts with UBQLN1 (via ubiquitin-like domain). Interacts with DDI2. Isoform Rpn10A is ubiquitous whereas isoform Rpn10E is mostly expressed in the embryonic brain.

Its function is as follows. Component of the 26S proteasome, a multiprotein complex involved in the ATP-dependent degradation of ubiquitinated proteins. This complex plays a key role in the maintenance of protein homeostasis by removing misfolded or damaged proteins, which could impair cellular functions, and by removing proteins whose functions are no longer required. Therefore, the proteasome participates in numerous cellular processes, including cell cycle progression, apoptosis, or DNA damage repair. PSMD4 acts as an ubiquitin receptor subunit through ubiquitin-interacting motifs and selects ubiquitin-conjugates for destruction. Displays a preferred selectivity for longer polyubiquitin chains. The chain is 26S proteasome non-ATPase regulatory subunit 4 (Psmd4) from Mus musculus (Mouse).